Here is a 103-residue protein sequence, read N- to C-terminus: MAAVSLSVSTVKPLGDRIFVKVAESEERTAGGILLPDNAREKPQVGEVTAVGPGKLTEDGKRQPMDVKVGDKVLYSKYAGTEVKLAGEDYVLLSEKDILAIVG.

Belongs to the GroES chaperonin family. Heptamer of 7 subunits arranged in a ring. Interacts with the chaperonin GroEL.

The protein localises to the cytoplasm. Functionally, together with the chaperonin GroEL, plays an essential role in assisting protein folding. The GroEL-GroES system forms a nano-cage that allows encapsulation of the non-native substrate proteins and provides a physical environment optimized to promote and accelerate protein folding. GroES binds to the apical surface of the GroEL ring, thereby capping the opening of the GroEL channel. This is Co-chaperonin GroES from Thermosynechococcus vestitus (strain NIES-2133 / IAM M-273 / BP-1).